A 298-amino-acid polypeptide reads, in one-letter code: Elongation factor Ts (298 aa).

The involved in Mg(2+) ion dislocation from EF-Tu stretch occupies residues 80–83 (TDFV).

The protein belongs to the EF-Ts family.

Its subcellular location is the cytoplasm. In terms of biological role, associates with the EF-Tu.GDP complex and induces the exchange of GDP to GTP. It remains bound to the aminoacyl-tRNA.EF-Tu.GTP complex up to the GTP hydrolysis stage on the ribosome. The protein is Elongation factor Ts of Paracidovorax citrulli (strain AAC00-1) (Acidovorax citrulli).